The following is a 116-amino-acid chain: Large ribosomal subunit protein bL19 (116 aa).

Belongs to the bacterial ribosomal protein bL19 family.

In terms of biological role, this protein is located at the 30S-50S ribosomal subunit interface and may play a role in the structure and function of the aminoacyl-tRNA binding site. This Mycoplasma mobile (strain ATCC 43663 / 163K / NCTC 11711) (Mesomycoplasma mobile) protein is Large ribosomal subunit protein bL19.